Consider the following 232-residue polypeptide: CD302 antigen (232 aa).

Positions 1–22 (MPRAAPPALLLPLLGLAAAAAA) are cleaved as a signal peptide. Residues 23 to 168 (DCPSSTWVQF…YEKKYLSDNR (146 aa)) lie on the Extracellular side of the membrane. Residues 32 to 152 (FQDSCYIFLQ…CEVSSVEGTL (121 aa)) form the C-type lectin domain. The N-linked (GlcNAc...) asparagine glycan is linked to asparagine 109. Cysteine 128 and cysteine 143 form a disulfide bridge. The helical transmembrane segment at 169 to 189 (ILISALVIASTVILTVLGAVV) threads the bilayer. Residues 190-232 (WFLYKRSLDSGFTTVFSAAHQSPYNDDCVLVVAEENEYDIQFN) lie on the Cytoplasmic side of the membrane.

Its subcellular location is the membrane. The protein resides in the cell projection. It is found in the filopodium. It localises to the cytoplasm. The protein localises to the cell cortex. Its subcellular location is the microvillus. Functionally, potential multifunctional C-type lectin receptor that may play roles in endocytosis and phagocytosis as well as in cell adhesion and migration. This Bos taurus (Bovine) protein is CD302 antigen.